The following is a 1022-amino-acid chain: Mismatch repair endonuclease pms1 (1022 aa).

Disordered regions lie at residues 251–282 (TGQS…SQSS), 390–527 (FNDE…EDED), and 622–676 (KMKQ…IDGY). Positions 403 to 412 (KQSKISSFPN) are enriched in polar residues. 2 stretches are compositionally biased toward low complexity: residues 436–469 (TTTT…NNRN) and 647–664 (QKQQ…QQQQ).

This sequence belongs to the DNA mismatch repair MutL/HexB family. In terms of assembly, heterodimer of pms1 and mlh1 (MutL alpha). Forms a ternary complex with MutS alpha (msh2-msh6) or MutS beta (msh2-msh3).

It localises to the nucleus. Functionally, component of the post-replicative DNA mismatch repair system (MMR). Heterodimerizes with mlh1 to form MutL alpha. DNA repair is initiated by MutS alpha (msh2-msh6) or MutS beta (msh2-msh3) binding to a dsDNA mismatch, then MutL alpha is recruited to the heteroduplex. Assembly of the MutL-MutS-heteroduplex ternary complex in presence of rfc and pcna is sufficient to activate endonuclease activity of pms1. It introduces single-strand breaks near the mismatch and thus generates new entry points for the exonuclease exo1 to degrade the strand containing the mismatch. This chain is Mismatch repair endonuclease pms1 (pms1), found in Dictyostelium discoideum (Social amoeba).